The following is a 276-amino-acid chain: UPF0328 protein ECU04_0100 (276 aa).

The disordered stretch occupies residues 1–24 (MGIIDVQRSHLTATPSKERDAPAH).

The protein belongs to the UPF0328 family.

In Encephalitozoon cuniculi (strain GB-M1) (Microsporidian parasite), this protein is UPF0328 protein ECU04_0100.